A 732-amino-acid polypeptide reads, in one-letter code: Alpha-galactosidase Mel36A (732 aa).

Residues 370–371 (DD), Trp415, Arg447, 480–484 (KWDMN), 530–533 (CSGG), and Asp552 each bind substrate. The Nucleophile role is filled by Asp482. Asp552 (proton donor) is an active-site residue.

It belongs to the glycosyl hydrolase 36 family. In terms of assembly, homotetramer.

It catalyses the reaction Hydrolysis of terminal, non-reducing alpha-D-galactose residues in alpha-D-galactosides, including galactose oligosaccharides, galactomannans and galactolipids.. In terms of biological role, hydrolyzes the short-chain alpha-galactosaccharide raffinose. This chain is Alpha-galactosidase Mel36A, found in Lactobacillus acidophilus (strain ATCC 700396 / NCK56 / N2 / NCFM).